A 20-amino-acid polypeptide reads, in one-letter code: Superoxide dismutase [Mn], mitochondrial (20 aa).

The protein belongs to the iron/manganese superoxide dismutase family. In terms of assembly, homotetramer. It depends on Mn(2+) as a cofactor.

It localises to the mitochondrion matrix. It catalyses the reaction 2 superoxide + 2 H(+) = H2O2 + O2. Its function is as follows. Destroys superoxide anion radicals which are normally produced within the cells and which are toxic to biological systems. The polypeptide is Superoxide dismutase [Mn], mitochondrial (SODA) (Hordeum vulgare (Barley)).